The primary structure comprises 199 residues: Adenylyl-sulfate kinase (199 aa).

34–41 (GLSGSGKS) provides a ligand contact to ATP. The Phosphoserine intermediate role is filled by Ser-108.

It belongs to the APS kinase family.

The catalysed reaction is adenosine 5'-phosphosulfate + ATP = 3'-phosphoadenylyl sulfate + ADP + H(+). It participates in sulfur metabolism; hydrogen sulfide biosynthesis; sulfite from sulfate: step 2/3. In terms of biological role, catalyzes the synthesis of activated sulfate. The chain is Adenylyl-sulfate kinase from Staphylococcus carnosus (strain TM300).